A 587-amino-acid polypeptide reads, in one-letter code: Bifunctional dihydrofolate reductase-thymidylate synthase (587 aa).

Residues 9–237 form the DHFR domain; that stretch reads DIYAICACCK…TTLDFIIYSK (229 aa). 36 to 42 serves as a coordination point for NADP(+); sequence GIGNAGV. Residue aspartate 51 coordinates substrate. NADP(+) contacts are provided by residues 108–110 and 129–132; these read KKS and LSRT. Substrate-binding residues include isoleucine 173, tyrosine 179, and threonine 194. Position 174–181 (174–181) interacts with NADP(+); the sequence is GGSSVYKE. A thymidylate synthase region spans residues 301–587; the sequence is NHPEYQYLNI…HDKINMDMAA (287 aa). Arginine 324 is a dUMP binding site. Cysteine 469 is a catalytic residue. Residues histidine 470, 488-492, asparagine 500, and 530-532 each bind dUMP; these read QRSCD and HVY.

In the N-terminal section; belongs to the dihydrofolate reductase family. The protein in the C-terminal section; belongs to the thymidylate synthase family. Homodimer.

It carries out the reaction (6S)-5,6,7,8-tetrahydrofolate + NADP(+) = 7,8-dihydrofolate + NADPH + H(+). It catalyses the reaction dUMP + (6R)-5,10-methylene-5,6,7,8-tetrahydrofolate = 7,8-dihydrofolate + dTMP. It participates in cofactor biosynthesis; tetrahydrofolate biosynthesis; 5,6,7,8-tetrahydrofolate from 7,8-dihydrofolate: step 1/1. Bifunctional enzyme. Involved in de novo dTMP biosynthesis. Key enzyme in folate metabolism. Catalyzes an essential reaction for de novo glycine and purine synthesis, DNA precursor synthesis, and for the conversion of dUMP to dTMP. This Plasmodium berghei (strain Anka) protein is Bifunctional dihydrofolate reductase-thymidylate synthase.